The following is a 56-amino-acid chain: Calsequestrin-1 (56 aa).

Tyr-9 is subject to Phosphotyrosine. Position 47 is a phosphoserine (Ser-47).

The protein belongs to the calsequestrin family. In terms of assembly, monomer; increases in response to a depletion of intracellular calcium. Homodimer. Homotetramer and homopolymer. Can form linear homooligomers. Ca(2+) ions promote oligomerization. Interacts (via C-terminal end and preferentially with the monomeric form) with STIM1; this interaction increases in response to a depletion of intracellular calcium, decreases both STIM1 aggregation and clustering, interaction of STIM1 with ORAI1 and store-operated Ca(2+) entry (SOCE) activity. Interacts with ASPH and TRDN. In terms of processing, N-glycosylated.

The protein localises to the endoplasmic reticulum. It is found in the sarcoplasmic reticulum. Its subcellular location is the sarcoplasmic reticulum lumen. The protein resides in the sarcoplasmic reticulum membrane. It localises to the mitochondrion matrix. In terms of biological role, calsequestrin is a high-capacity, moderate affinity, calcium-binding protein and thus acts as an internal calcium store in muscle. Calcium ions are bound by clusters of acidic residues at the protein surface, often at the interface between subunits. Can bind around 80 Ca(2+) ions. Regulates the release of lumenal Ca(2+) via the calcium release channel RYR1; this plays an important role in triggering muscle contraction. Negatively regulates store-operated Ca(2+) entry (SOCE) activity. This is Calsequestrin-1 (CASQ1) from Canis lupus familiaris (Dog).